Here is a 764-residue protein sequence, read N- to C-terminus: Protective antigen (764 aa).

The N-terminal stretch at 1–29 (MKKRKVLIPLMALSTILVSSTGNLEVIQA) is a signal peptide. The segment at 30–287 (EVKQENRLLN…PEARHPLVAA (258 aa)) is domain 1, calcium-binding; LF and EF binding sites. Residues 43–179 (SSSQGLLGYY…NKKEVISSDN (137 aa)) form the PA14 domain. Positions 176 to 214 (SSDNLQLPELKQKSSNSRKKRSTSAGPTVPDRDNDGIPD) are disordered. D206, D208, D210, I212, and E217 together coordinate Ca(2+). The segment at 231–239 (FLSPWISNI) is alpha-clamp. Ca(2+) is bound by residues S251, K254, and D264. Residues 288–516 (YPIVHVDMEN…SEVLPQIQET (229 aa)) form a domain 2, membrane insertion and heptamerization region. The tract at residues 302-333 (KNEDQSTQNTDSQTRTISKNTSTSRTHTSEVH) is disordered. Positions 306–327 (QSTQNTDSQTRTISKNTSTSRT) are enriched in polar residues. Transmembrane regions (beta stranded) follow at residues 331–342 (EVHGNAEVHASF) and 345–354 (IGGSVSAGFS). The tract at residues 517–624 (TARIIFNGKD…KMNILIRDKR (108 aa)) is domain 3, heptamerization. The domain 4, binding to the receptor stretch occupies residues 625 to 764 (FHYDRNNIAV…IFSKKGYEIG (140 aa)).

Belongs to the bacterial binary toxin family. In terms of assembly, interacts with host ANTXR1 and ANTXR2. Homooligomer; homooligomerizes to form homoheptamers (PA-63(7)) or homooctamers (PA-63(8)). PA-63(7) or PA-63(8) form ring-shaped oligomers that are in a pre-pore conformation, which do not penetrate the host membrane. PA-63(8) displays an enhanced stability, suggesting that this form circulates in the blood to reach and exert toxicity even in distant tissues. Interacts with lethal factor (LF) and edema factor (EF); can bind LF and EF simultaneously and interaction takes place following homooligomerization on the host cell membrane. PA-63(7) homoheptamer interacts with three molecules of LF to form the PA(7)LF(3) complex, in which the relative position of the N-terminal alpha-helices in the three LFs determines which factor is translocated first. In terms of processing, proteolytic activation by FURIN cleaves the protein in two parts, PA-20 and PA-63; the latter is the mature protein. The cleavage occurs at the cell surface and probably in the serum of infected animals as well; both native and cleaved PA are able to bind to the cell receptor. The release of PA-20 from the remaining receptor-bound PA-63 exposes the binding site for EF and LF, and promotes oligomerization and internalization of the protein.

It is found in the secreted. It localises to the host cell membrane. The protein resides in the host endosome membrane. Functionally, protective antigen constitutes one of the three proteins composing the anthrax toxin; it mediates attachment to host cells and translocation of edema factor (EF) and lethal factor (LF) into the host cytoplasm. PA associated with LF forms the lethal toxin (LeTx) and causes death when injected; PA associated with EF forms the edema toxin (EdTx) and produces edema. PA induces immunity to infection with anthrax. Its function is as follows. Mediates the attachment to host cells by binding host cell receptors ANTXR1 and ANTXR2. Following host cell surface attachment, PA is cleaved by FURIN to generate the PA-63 (Protective antigen PA-63) form, which constitutes the mature form of the protein that oligomerizes and forms a pore to translocate the enzymatic toxin components edema factor (EF) and lethal factor (LF) into the host cytosol. In terms of biological role, mature form that oligomerizes and forms a pore to translocate the enzymatic toxin components edema factor (EF) and lethal factor (LF) into the host cytosol. Following attachment to host cell receptors and cleavage by FURIN, homooligomerizes to form ring-shaped oligomers that are in a pre-pore conformation, and associates with EF and LF. Toxin-leaded complexes are then endocytosed in a clathrin-dependent process, followed by a conformational change of oligomerized PA-63 from the pre-pore to pore state, which is triggered by the low pH in the endosome. Once active, the pore mediates unfolding of EF and LF, which pass through the pore and translocate into the host cytosol. The sequence is that of Protective antigen (pagA) from Bacillus anthracis.